Reading from the N-terminus, the 236-residue chain is Potassium/proton antiporter CemA (236 aa).

The next 4 helical transmembrane spans lie at 12 to 32, 114 to 134, 161 to 181, and 196 to 216; these read TVTSIKYFISFILFVLITNHV, IANVFADLLSLCIFVLALLLG, IILFTDIFVGFHSSHGWEILI, and FIFLFVATFPVVLDTVFKYWI.

It belongs to the CemA family.

The protein resides in the plastid. Its subcellular location is the chloroplast inner membrane. The enzyme catalyses K(+)(in) + H(+)(out) = K(+)(out) + H(+)(in). In terms of biological role, contributes to K(+)/H(+) antiport activity by supporting proton efflux to control proton extrusion and homeostasis in chloroplasts in a light-dependent manner to modulate photosynthesis. Prevents excessive induction of non-photochemical quenching (NPQ) under continuous-light conditions. Indirectly promotes efficient inorganic carbon uptake into chloroplasts. In Chlorokybus atmophyticus (Soil alga), this protein is Potassium/proton antiporter CemA.